A 352-amino-acid polypeptide reads, in one-letter code: Desmethylxanthohumol 6'-O-methyltransferase (352 aa).

Residue D219 coordinates S-adenosyl-L-methionine. H257 serves as the catalytic Proton acceptor.

The protein belongs to the class I-like SAM-binding methyltransferase superfamily. Cation-independent O-methyltransferase family. In terms of assembly, homodimer. As to expression, highly expressed in lupulin glands. Detected in early-, mid- and late-stage cones.

Its subcellular location is the cytoplasm. The catalysed reaction is desmethylxanthohumol + S-adenosyl-L-methionine = xanthohumol + S-adenosyl-L-homocysteine + H(+). The enzyme catalyses xanthogalenol + S-adenosyl-L-methionine = 4'-O-methylxanthohumol + S-adenosyl-L-homocysteine + H(+). Its pathway is secondary metabolite biosynthesis. Inhibited by S-adenosyl homocysteine. Functionally, involved in the biosynthesis of prenylated phenolics natural products which contribute to the bitter taste of beer and display broad biological activities. Catalyzes the biosynthesis of xanthohumol. Methylates desmethylxanthohumol and xanthogalenol, but not caffeic acid, prenylflavanones, simple phenols or phenylpropanoids. This chain is Desmethylxanthohumol 6'-O-methyltransferase, found in Humulus lupulus (European hop).